We begin with the raw amino-acid sequence, 515 residues long: Fatty acyl-CoA reductase 1 (515 aa).

The Cytoplasmic portion of the chain corresponds to Met1–Asn465. Residues Ile466–Ile483 traverse the membrane as a helical segment. Topologically, residues Ala484 to Tyr515 are peroxisomal.

The protein belongs to the fatty acyl-CoA reductase family.

Its subcellular location is the peroxisome membrane. It carries out the reaction a long-chain fatty acyl-CoA + 2 NADPH + 2 H(+) = a long-chain primary fatty alcohol + 2 NADP(+) + CoA. The enzyme catalyses hexadecanoyl-CoA + 2 NADPH + 2 H(+) = hexadecan-1-ol + 2 NADP(+) + CoA. The catalysed reaction is octadecanoyl-CoA + 2 NADPH + 2 H(+) = octadecan-1-ol + 2 NADP(+) + CoA. It catalyses the reaction (9Z)-octadecenoyl-CoA + 2 NADPH + 2 H(+) = (9Z)-octadecen-1-ol + 2 NADP(+) + CoA. It carries out the reaction (9Z,12Z)-octadecadienoyl-CoA + 2 NADPH + 2 H(+) = (9Z,12Z)-octadecadien-1-ol + 2 NADP(+) + CoA. The enzyme catalyses eicosanoyl-CoA + 2 NADPH + 2 H(+) = eicosan-1-ol + 2 NADP(+) + CoA. The catalysed reaction is 16-methylheptadecanoyl-CoA + 2 NADPH + 2 H(+) = 16-methylheptadecan-1-ol + 2 NADP(+) + CoA. It catalyses the reaction 18-methylnonadecanoyl-CoA + 2 NADPH + 2 H(+) = 18-methylnonadecan-1-ol + 2 NADP(+) + CoA. Catalyzes the reduction of saturated and unsaturated C16 or C18 fatty acyl-CoA to fatty alcohols. It plays an essential role in the production of ether lipids/plasmalogens which synthesis requires fatty alcohols. In parallel, it is also required for wax monoesters production since fatty alcohols also constitute a substrate for their synthesis. This is Fatty acyl-CoA reductase 1 from Gallus gallus (Chicken).